The primary structure comprises 368 residues: ICEBs1 integrase (368 aa).

The Core-binding (CB) domain occupies 61–143; that stretch reads VSFPTLISIY…SLSKIFDTAV (83 aa). Positions 164–362 constitute a Tyr recombinase domain; it reads KKMKFWRPEE…YPNKQKEMAD (199 aa). Catalysis depends on residues R201, K239, H313, R316, and H339. Catalysis depends on Y349, which acts as the O-(3'-phospho-DNA)-tyrosine intermediate.

Belongs to the 'phage' integrase family.

Functionally, putative integrase that is involved in the insertion of the integrative and conjugative element ICEBs1. Required for the excision of ICEBs1 from the donor cell genome and subsequent integration in the recipient cell genome. Appears not to be transferred through the mating pore. Integration of ICEBs1 involves an attachment site in the chromosome, attB, and a site in the circular form of ICEBs1, attICEBs1. This chain is ICEBs1 integrase (int), found in Bacillus subtilis (strain 168).